The following is a 322-amino-acid chain: Protease HtpX homolog (322 aa).

The next 2 membrane-spanning stretches (helical) occupy residues 19–39 and 61–81; these read ILLI…CYLL and FINL…IAYF. H165 is a binding site for Zn(2+). E166 is a catalytic residue. H169 contributes to the Zn(2+) binding site. 2 helical membrane passes run 175 to 195 and 216 to 236; these read VRLL…AQIA and ILIL…ATLM. E245 is a binding site for Zn(2+).

The protein belongs to the peptidase M48B family. Zn(2+) serves as cofactor.

It is found in the cell inner membrane. The sequence is that of Protease HtpX homolog from Bacteroides fragilis (strain ATCC 25285 / DSM 2151 / CCUG 4856 / JCM 11019 / LMG 10263 / NCTC 9343 / Onslow / VPI 2553 / EN-2).